The following is a 260-amino-acid chain: Small ribosomal subunit protein uS2 (260 aa).

Belongs to the universal ribosomal protein uS2 family.

The protein is Small ribosomal subunit protein uS2 of Streptococcus sanguinis (strain SK36).